A 512-amino-acid chain; its full sequence is 3-ketoacyl-CoA synthase 9 (512 aa).

A run of 2 helical transmembrane segments spans residues 44 to 64 and 83 to 103; these read LITH…VTEI and LVAF…YIMS. The FAE domain maps to 100 to 389; that stretch reads YIMSRPRSVY…FFMTLVTKKL (290 aa). Active-site residues include Cys-244, His-323, His-407, His-411, His-440, and Asn-444.

The protein belongs to the thiolase-like superfamily. Chalcone/stilbene synthases family. Expressed in seedlings, stems, leaves, flowers and siliques. Expressed in roots, leaves, and stems, including epidermis, silique walls, sepals, the upper portion of the styles, and seed coats, but not in developing embryos.

It localises to the endoplasmic reticulum membrane. It catalyses the reaction a very-long-chain acyl-CoA + malonyl-CoA + H(+) = a very-long-chain 3-oxoacyl-CoA + CO2 + CoA. The protein operates within lipid metabolism; fatty acid biosynthesis. Its function is as follows. Involved in the elongation of C22 to C24 fatty acids, which are precursors for the biosynthesis of cuticular waxes, aliphatic suberins, and membrane lipids, including sphingolipids and phospholipids. The chain is 3-ketoacyl-CoA synthase 9 from Arabidopsis thaliana (Mouse-ear cress).